Consider the following 460-residue polypeptide: Cysteine--tRNA ligase (460 aa).

Position 28 (Cys28) interacts with Zn(2+). Positions 30–40 (MTVYDYCHLGH) match the 'HIGH' region motif. 3 residues coordinate Zn(2+): Cys209, His234, and Glu238. The 'KMSKS' region signature appears at 266-270 (KMSKS). Lys269 lines the ATP pocket.

This sequence belongs to the class-I aminoacyl-tRNA synthetase family. Monomer. Zn(2+) is required as a cofactor.

Its subcellular location is the cytoplasm. It carries out the reaction tRNA(Cys) + L-cysteine + ATP = L-cysteinyl-tRNA(Cys) + AMP + diphosphate. The polypeptide is Cysteine--tRNA ligase (Pseudomonas putida (strain ATCC 47054 / DSM 6125 / CFBP 8728 / NCIMB 11950 / KT2440)).